The primary structure comprises 997 residues: Protein translocase subunit SecA (997 aa).

ATP contacts are provided by residues Gln102, 120–124 (GEGKT), and Asp521. Positions 893–997 (PADASPNGVV…KYKKCHGAEA (105 aa)) are disordered. The span at 938–953 (AIEREFEKKKQQELSH) shows a compositional bias: basic and acidic residues. The Zn(2+) site is built by Cys981, Cys983, Cys992, and His993. Basic residues predominate over residues 987-997 (KKYKKCHGAEA).

It belongs to the SecA family. In terms of assembly, monomer and homodimer. Part of the essential Sec protein translocation apparatus which comprises SecA, SecYEG and auxiliary proteins SecDF. Other proteins may also be involved. Zn(2+) is required as a cofactor.

Its subcellular location is the cell inner membrane. The protein resides in the cytoplasm. The catalysed reaction is ATP + H2O + cellular proteinSide 1 = ADP + phosphate + cellular proteinSide 2.. Its function is as follows. Part of the Sec protein translocase complex. Interacts with the SecYEG preprotein conducting channel. Has a central role in coupling the hydrolysis of ATP to the transfer of proteins into and across the cell membrane, serving as an ATP-driven molecular motor driving the stepwise translocation of polypeptide chains across the membrane. The sequence is that of Protein translocase subunit SecA from Acidobacterium capsulatum (strain ATCC 51196 / DSM 11244 / BCRC 80197 / JCM 7670 / NBRC 15755 / NCIMB 13165 / 161).